We begin with the raw amino-acid sequence, 215 residues long: Large ribosomal subunit protein uL1 (215 aa).

The protein belongs to the universal ribosomal protein uL1 family. In terms of assembly, part of the 50S ribosomal subunit.

Binds directly to 23S rRNA. Probably involved in E site tRNA release. Its function is as follows. Protein L1 is also a translational repressor protein, it controls the translation of its operon by binding to its mRNA. The chain is Large ribosomal subunit protein uL1 from Methanospirillum hungatei JF-1 (strain ATCC 27890 / DSM 864 / NBRC 100397 / JF-1).